A 295-amino-acid chain; its full sequence is Indole-3-glycerol phosphate synthase (295 aa).

This sequence belongs to the TrpC family.

It catalyses the reaction 1-(2-carboxyphenylamino)-1-deoxy-D-ribulose 5-phosphate + H(+) = (1S,2R)-1-C-(indol-3-yl)glycerol 3-phosphate + CO2 + H2O. It functions in the pathway amino-acid biosynthesis; L-tryptophan biosynthesis; L-tryptophan from chorismate: step 4/5. The protein is Indole-3-glycerol phosphate synthase of Prochlorococcus marinus (strain NATL2A).